Here is a 170-residue protein sequence, read N- to C-terminus: dCTP pyrophosphatase 1 (170 aa).

The interval 1-25 (MSTAGDGERGTVGQEDSAAARPFRF) is disordered. Ser-2 carries the post-translational modification N-acetylserine. The residue at position 2 (Ser-2) is a Phosphoserine. Substrate contacts are provided by residues His-38 and 47–51 (WEQFH). Residues Glu-63 and Glu-66 each coordinate Mg(2+). A substrate-binding site is contributed by Trp-73. 2 residues coordinate Mg(2+): Glu-95 and Asp-98. Tyr-102 serves as a coordination point for substrate. Positions 150-170 (SENQAVGAGDPASELRDQAST) are disordered.

In terms of assembly, homotetramer. Mg(2+) is required as a cofactor. As to expression, ubiquitous. Highly expressed in heart, liver, skeletal muscle, cerebellum, brain, and salivary gland.

The protein resides in the cytoplasm. It localises to the cytosol. It catalyses the reaction dCTP + H2O = dCMP + diphosphate + H(+). With respect to regulation, inhibited by divalent calcium or cadmium ions. Functionally, hydrolyzes deoxynucleoside triphosphates (dNTPs) to the corresponding nucleoside monophosphates. Has a strong preference for dCTP and its analogs including 5-iodo-dCTP and 5-methyl-dCTP for which it may even have a higher efficiency. May protect DNA or RNA against the incorporation of these genotoxic nucleotide analogs through their catabolism. The chain is dCTP pyrophosphatase 1 from Mus musculus (Mouse).